The chain runs to 80 residues: Clavanin-A (80 aa).

A signal peptide spans 1–19 (MKTTILILLILGLGINAKS). The propeptide occupies 20 to 29 (LEERKSEEEK). The residue at position 52 (phenylalanine 52) is a Phenylalanine amide. Positions 54 to 80 (DDQQDNGKFYGHYAEDNGKHWYDTGDQ) are excised as a propeptide.

It localises to the secreted. In terms of biological role, has antimicrobial activity. This chain is Clavanin-A, found in Styela clava (Sea squirt).